Here is a 212-residue protein sequence, read N- to C-terminus: MGTNKPVVIGIAGGSGSGKTSVTKAIFDHFKGHSILILEQDYYYKDQSHLPMEERLKTNYDHPLAFDNDLLIEHLQQLLAYKQVDKPVYDYTLHTRSEEIIPVEPKDVIILEGILILEDPRLCELMDIKLFVDTDADLRILRRMQRDIKERGRTMDSVIDQYVNVVRPMHNQFIEPSKKFADIIIPEGGQNHVAIDSMVTKIATILEQKVNL.

13 to 20 (GGSGSGKT) is a binding site for ATP.

This sequence belongs to the uridine kinase family.

It is found in the cytoplasm. It catalyses the reaction uridine + ATP = UMP + ADP + H(+). It carries out the reaction cytidine + ATP = CMP + ADP + H(+). It participates in pyrimidine metabolism; CTP biosynthesis via salvage pathway; CTP from cytidine: step 1/3. Its pathway is pyrimidine metabolism; UMP biosynthesis via salvage pathway; UMP from uridine: step 1/1. The sequence is that of Uridine kinase from Bacillus anthracis (strain A0248).